A 229-amino-acid polypeptide reads, in one-letter code: MYDISKWKHVFKLDPNKEISDEHLEMICESGTDAVIVGGSDGVTIDNVLHMLVSIRRYAVPCVLEVSNVEAITPGFDFYYIPSVLNSRKVEWLTGVHHEALKEFGDIMNWDEIFMEGYCVLNPEAKVAQLTEAKCDLTEDDVIAYARMADKLLHLPIFYLEYSGTYGDVELVKKVKAELQQAKLYYGGGISNVKEAKEVAQYADTVVVGNVIYENIKAALQTVKAVKGE.

Sn-glycerol 1-phosphate is bound at residue Lys12. Asp14 and Ser40 together coordinate Mg(2+). Sn-glycerol 1-phosphate contacts are provided by residues 159–164, Gly189, and 209–210; these read YLEYSG and GN.

This sequence belongs to the GGGP/HepGP synthase family. Group I subfamily. As to quaternary structure, homodimer. Requires Mg(2+) as cofactor.

It carries out the reaction sn-glycerol 1-phosphate + all-trans-heptaprenyl diphosphate = 3-heptaprenyl-sn-glycero-1-phosphate + diphosphate. It functions in the pathway membrane lipid metabolism; glycerophospholipid metabolism. Its function is as follows. Prenyltransferase that catalyzes in vivo the transfer of the heptaprenyl moiety of heptaprenyl pyrophosphate (HepPP; 35 carbon atoms) to the C3 hydroxyl of sn-glycerol-1-phosphate (G1P), producing heptaprenylglyceryl phosphate (HepGP). This reaction is an ether-bond-formation step in the biosynthesis of archaea-type G1P-based membrane lipids found in Bacillales. The chain is Heptaprenylglyceryl phosphate synthase from Bacillus cytotoxicus (strain DSM 22905 / CIP 110041 / 391-98 / NVH 391-98).